The sequence spans 1037 residues: Guanine nucleotide-binding protein G(s) subunit alpha isoforms XLas (1037 aa).

Disordered stretches follow at residues 1–105 (MGVR…MPFE), 185–224 (APGG…EETM), 283–588 (SPSQ…TSGC), and 640–666 (PLAE…KKRS). Residues 33–46 (APGAAAPGAGPSPA) show a composition bias toward low complexity. Over residues 343-354 (PDKRERAERPPV) the composition is skewed to basic and acidic residues. Composition is skewed to low complexity over residues 361 to 408 (MEGA…GATP) and 416 to 521 (APAD…PASG). Basic and acidic residues predominate over residues 553 to 565 (GKSESSRGRRVYY). A compositionally biased stretch (acidic residues) spans 572 to 583 (SDDDSSGDESDD). A compositionally biased stretch (basic and acidic residues) spans 640–660 (PLAEKRRQMRKEALEKRAQKR). The stretch at 641-667 (LAEKRRQMRKEALEKRAQKRAEKKRSK) forms a coiled coil. In terms of domain architecture, G-alpha spans 682 to 1037 (CTHRLLLLGA…RMHLRQYELL (356 aa)). Positions 685 to 698 (RLLLLGAGESGKST) are G1 motif. GTP is bound at residue 690–698 (GAGESGKST). Mg(2+) is bound at residue serine 697. The tract at residues 711-734 (FNGEGGEEDPQAARSNSDGEKATK) is disordered. Residues 730–756 (EKATKVQDIKNNLKEAIETIVAAMSNL) are a coiled coil. Positions 839-847 (DLLRCRVLT) are G2 motif. GTP contacts are provided by residues 840 to 847 (LLRCRVLT), 866 to 870 (DVGGQ), and 935 to 938 (NKQD). Position 844 is an ADP-ribosylarginine; by cholera toxin (arginine 844). Threonine 847 provides a ligand contact to Mg(2+). Residues 862-871 (FHMFDVGGQR) are G3 motif. The segment at 931–938 (ILFLNKQD) is G4 motif. Serine 995 is modified (phosphoserine). Residues 1007-1012 (TCAVDT) are G5 motif. Alanine 1009 provides a ligand contact to GTP.

It belongs to the G-alpha family. G(s) subfamily. In terms of assembly, g proteins are composed of 3 units; alpha, beta and gamma. The alpha chain contains the guanine nucleotide binding site. Interacts through its N-terminal region with ALEX which is produced from the same locus in a different open reading frame. This interaction may inhibit its adenylyl cyclase-stimulating activity. Interacts with MAGED2.

It localises to the cell membrane. Its subcellular location is the apical cell membrane. The catalysed reaction is GTP + H2O = GDP + phosphate + H(+). Its function is as follows. Guanine nucleotide-binding proteins (G proteins) function as transducers in numerous signaling pathways controlled by G protein-coupled receptors (GPCRs). The alpha chain contains the guanine nucleotide binding site and alternates between an active, GTP-bound state and an inactive, GDP-bound state. Signaling by an activated GPCR promotes GDP release and GTP binding. The alpha subunit has a low GTPase activity that converts bound GTP to GDP, thereby terminating the signal. Both GDP release and GTP hydrolysis are modulated by numerous regulatory proteins. Signaling involves the activation of adenylyl cyclases, resulting in increased levels of the signaling molecule cAMP. GNAS functions downstream of several GPCRs, including beta-adrenergic receptors. XLas isoforms interact with the same set of receptors as Gnas isoforms. The polypeptide is Guanine nucleotide-binding protein G(s) subunit alpha isoforms XLas (GNAS) (Homo sapiens (Human)).